The following is a 150-amino-acid chain: Ribonuclease H (150 aa).

In terms of domain architecture, RNase H type-1 spans 7–148; sequence ESNIVEIWTD…ADQLATKARM (142 aa). Mg(2+) contacts are provided by Asp16, Glu54, Asp76, and Asp140.

Belongs to the RNase H family. In terms of assembly, monomer. Mg(2+) is required as a cofactor.

It is found in the cytoplasm. It carries out the reaction Endonucleolytic cleavage to 5'-phosphomonoester.. In terms of biological role, endonuclease that specifically degrades the RNA of RNA-DNA hybrids. This Granulibacter bethesdensis (strain ATCC BAA-1260 / CGDNIH1) protein is Ribonuclease H.